Consider the following 129-residue polypeptide: Lysozyme C (129 aa).

One can recognise a C-type lysozyme domain in the interval 1–129 (KVFGRCELAA…VRVWIKGCRL (129 aa)). 4 cysteine pairs are disulfide-bonded: Cys-6-Cys-127, Cys-30-Cys-115, Cys-64-Cys-80, and Cys-76-Cys-94. Catalysis depends on residues Glu-35 and Asp-52.

Belongs to the glycosyl hydrolase 22 family. As to quaternary structure, monomer.

The protein localises to the secreted. It catalyses the reaction Hydrolysis of (1-&gt;4)-beta-linkages between N-acetylmuramic acid and N-acetyl-D-glucosamine residues in a peptidoglycan and between N-acetyl-D-glucosamine residues in chitodextrins.. Lysozymes have primarily a bacteriolytic function; those in tissues and body fluids are associated with the monocyte-macrophage system and enhance the activity of immunoagents. This chain is Lysozyme C (LYZ), found in Numida meleagris (Helmeted guineafowl).